An 85-amino-acid polypeptide reads, in one-letter code: Anti-neuroexcitation peptide 2 (85 aa).

The first 21 residues, 1-21 (MKLSLLLVISASMLIDGLVNA), serve as a signal peptide directing secretion. Positions 22–82 (DGYIRGSNGC…TWKSESNTCG (61 aa)) constitute an LCN-type CS-alpha/beta domain. 4 cysteine pairs are disulfide-bonded: cysteine 31/cysteine 81, cysteine 35/cysteine 56, cysteine 42/cysteine 63, and cysteine 46/cysteine 65.

Belongs to the long (4 C-C) scorpion toxin superfamily. Sodium channel inhibitor family. Beta subfamily. In terms of tissue distribution, expressed by the venom gland.

The protein resides in the secreted. Its function is as follows. Binds to sodium channels (Nav) and inhibits them. Recombinant ANEP delays the convulsion seizure of insect models by 18% and shows anti-neuroexcitatory activity. The sequence is that of Anti-neuroexcitation peptide 2 from Olivierus martensii (Manchurian scorpion).